A 183-amino-acid polypeptide reads, in one-letter code: Ribosome rescue factor SmrB (183 aa).

The Smr domain maps to 98-173 (LDLHGLTQLQ…GDAALLVLIE (76 aa)).

The protein belongs to the SmrB family. Associates with collided ribosomes, but not with correctly translating polysomes.

Functionally, acts as a ribosome collision sensor. Detects stalled/collided disomes (pairs of ribosomes where the leading ribosome is stalled and a second ribosome has collided with it) and endonucleolytically cleaves mRNA at the 5' boundary of the stalled ribosome. Stalled/collided disomes form a new interface (primarily via the 30S subunits) that binds SmrB. Cleaved mRNA becomes available for tmRNA ligation, leading to ribosomal subunit dissociation and rescue of stalled ribosomes. The polypeptide is Ribosome rescue factor SmrB (Salmonella arizonae (strain ATCC BAA-731 / CDC346-86 / RSK2980)).